We begin with the raw amino-acid sequence, 193 residues long: MSKISLIVGLGNPGAEYAQTRHNAGFWFVEQLADRYNITLKKDPKFHGFSGRGQIEGHDVRLLIPTTFMNRSGQSVVPFSKFYQISPEAILIAHDELDMDPGVIRLKTGGGHGGHNGLRDIVPHIGANFHRLRIGIGHPGSKDRVSGHVLGKAPQNEQTLMEDAIHHALSNTRLLVDGQIAQAMNQINAYKPK.

Tyr-17 contacts tRNA. His-22 functions as the Proton acceptor in the catalytic mechanism. The tRNA site is built by Phe-68, Asn-70, and Asn-116.

This sequence belongs to the PTH family. As to quaternary structure, monomer.

The protein localises to the cytoplasm. The catalysed reaction is an N-acyl-L-alpha-aminoacyl-tRNA + H2O = an N-acyl-L-amino acid + a tRNA + H(+). Functionally, hydrolyzes ribosome-free peptidyl-tRNAs (with 1 or more amino acids incorporated), which drop off the ribosome during protein synthesis, or as a result of ribosome stalling. Its function is as follows. Catalyzes the release of premature peptidyl moieties from peptidyl-tRNA molecules trapped in stalled 50S ribosomal subunits, and thus maintains levels of free tRNAs and 50S ribosomes. The sequence is that of Peptidyl-tRNA hydrolase from Acinetobacter baylyi (strain ATCC 33305 / BD413 / ADP1).